Here is a 324-residue protein sequence, read N- to C-terminus: Large ribosomal subunit protein uL3m (324 aa).

The transit peptide at 1–41 (MAAVPRGLLSRINQFLSIRSITPSSSESLPHCSSFFLIRRF) directs the protein to the mitochondrion. Residues 206-229 (PASHGASLSHRSGGSTGQRDAPGK) form a disordered region.

This sequence belongs to the universal ribosomal protein uL3 family. In terms of assembly, part of the 50S ribosomal subunit.

The protein localises to the mitochondrion. Functionally, one of the primary rRNA binding proteins, it binds directly near the 3'-end of the 23S rRNA, where it nucleates assembly of the 50S subunit. This chain is Large ribosomal subunit protein uL3m, found in Arabidopsis thaliana (Mouse-ear cress).